Reading from the N-terminus, the 160-residue chain is 2-C-methyl-D-erythritol 2,4-cyclodiphosphate synthase (160 aa).

Residues Asp-11 and His-13 each coordinate a divalent metal cation. Residues 11-13 (DVH) and 37-38 (HS) each bind 4-CDP-2-C-methyl-D-erythritol 2-phosphate. His-45 is a binding site for a divalent metal cation. 4-CDP-2-C-methyl-D-erythritol 2-phosphate contacts are provided by residues 59 to 61 (DIG), 64 to 68 (FPDTD), 103 to 109 (AQAPKMA), 135 to 138 (TTTE), Phe-142, and Arg-145.

This sequence belongs to the IspF family. As to quaternary structure, homotrimer. A divalent metal cation serves as cofactor.

It catalyses the reaction 4-CDP-2-C-methyl-D-erythritol 2-phosphate = 2-C-methyl-D-erythritol 2,4-cyclic diphosphate + CMP. Its pathway is isoprenoid biosynthesis; isopentenyl diphosphate biosynthesis via DXP pathway; isopentenyl diphosphate from 1-deoxy-D-xylulose 5-phosphate: step 4/6. In terms of biological role, involved in the biosynthesis of isopentenyl diphosphate (IPP) and dimethylallyl diphosphate (DMAPP), two major building blocks of isoprenoid compounds. Catalyzes the conversion of 4-diphosphocytidyl-2-C-methyl-D-erythritol 2-phosphate (CDP-ME2P) to 2-C-methyl-D-erythritol 2,4-cyclodiphosphate (ME-CPP) with a corresponding release of cytidine 5-monophosphate (CMP). The chain is 2-C-methyl-D-erythritol 2,4-cyclodiphosphate synthase from Thiobacillus denitrificans (strain ATCC 25259 / T1).